A 333-amino-acid chain; its full sequence is MKSATPDDLPRTGVEPDLSRSASECFESLWNGAIGMRSLPLTIAGARVLDAGVTCSGSLEAGLGLARLCLGDLANVRYVPATADDLVGLSVTIQTDHPVLSCLGGQYAGWPVSVADYFAMASGPMRCLRGKEAMLEQLHLSRQATDDDFAVGVLESDTLPGEDVIEAMADECGVDPSRLCLAVAPSTSIAGSAQVVSRSVETALHKLHALEFDVTRVVSAHGDAPLPPPAKKGDTIGGIGRTNDAMLYGARVTLWVDAEDDAIDSVASKVPSQSSDDHGRPFAEIFKQYEYDFYQVDPMLFSPAVVTIHSLQSGRTWRHGQISIDVMRKSFGL.

It belongs to the MCH family.

The protein resides in the cytoplasm. It carries out the reaction 5,10-methenyl-5,6,7,8-tetrahydromethanopterin + H2O = N(5)-formyl-5,6,7,8-tetrahydromethanopterin + H(+). Its pathway is one-carbon metabolism; formaldehyde degradation; formate from formaldehyde (H(4)MPT route): step 3/5. In terms of biological role, catalyzes the hydrolysis of methenyl-H(4)MPT(+) to 5-formyl-H(4)MPT. The chain is Methenyltetrahydromethanopterin cyclohydrolase (mch) from Rhodopirellula baltica (strain DSM 10527 / NCIMB 13988 / SH1).